A 1342-amino-acid polypeptide reads, in one-letter code: DNA-directed RNA polymerase subunit beta (1342 aa).

It belongs to the RNA polymerase beta chain family. The RNAP catalytic core consists of 2 alpha, 1 beta, 1 beta' and 1 omega subunit. When a sigma factor is associated with the core the holoenzyme is formed, which can initiate transcription.

The catalysed reaction is RNA(n) + a ribonucleoside 5'-triphosphate = RNA(n+1) + diphosphate. Its function is as follows. DNA-dependent RNA polymerase catalyzes the transcription of DNA into RNA using the four ribonucleoside triphosphates as substrates. In Buchnera aphidicola subsp. Acyrthosiphon pisum (strain Tuc7), this protein is DNA-directed RNA polymerase subunit beta.